The chain runs to 497 residues: Casein kinase I isoform delta (497 aa).

2 disordered regions span residues 1-58 (MATM…EEMN) and 86-109 (PIQQHQQPPLLQQAQPSQIPHPTQ). Positions 14-34 (WHNNTSTPMDTTEPATNSHNP) are enriched in polar residues. The span at 88–105 (QQHQQPPLLQQAQPSQIP) shows a compositional bias: low complexity. Positions 191 to 458 (FRLGRKIGSG…YLRNLFRTLF (268 aa)) constitute a Protein kinase domain. Residues 197–205 (IGSGSFGDI) and Lys-220 each bind ATP. Asp-310 serves as the catalytic Proton acceptor.

This sequence belongs to the protein kinase superfamily. CK1 Ser/Thr protein kinase family. Casein kinase I subfamily. In terms of assembly, monomer. As to expression, expressed throughout larval development and into the adult stage in both hypodermal seam cells and the hermaphrodite specific neuron.

The protein resides in the cytoplasm. Its subcellular location is the nucleus. It is found in the chromosome. The protein localises to the centromere. It localises to the cell junction. The protein resides in the adherens junction. It carries out the reaction L-seryl-[protein] + ATP = O-phospho-L-seryl-[protein] + ADP + H(+). The catalysed reaction is L-threonyl-[protein] + ATP = O-phospho-L-threonyl-[protein] + ADP + H(+). Its activity is regulated as follows. Exhibits substrate-dependent heparin activation. Functionally, essential serine/threonine-protein kinase that regulates diverse cellular growth and survival processes including Wnt signaling, DNA repair and circadian rhythms. Casein kinases are operationally defined by their preferential utilization of acidic proteins. Positively regulates the expression of components of the heterochronic pathway, which regulate developmental timing, such as the transcriptional repressor lin-42 and microRNAs such as let-7. Negatively regulates cell cycle exit and cell fusion to prevent the premature differentiation of hypodermal seam cells into adult cells. Plays a role in regulating axon branching and subsequently, the maturation of the nervous system, most likely by preventing the premature termination of transcripts for proteins such as Ankyrin/unc-44, which are required for maintaining the nervous system. May phosphorylate ssup-72 to promote nervous system maturation. The protein is Casein kinase I isoform delta of Caenorhabditis elegans.